A 409-amino-acid polypeptide reads, in one-letter code: MGLQKSHLTVCLPPSVPFLILVSTLATAKSVTNSTLNGTDVVLGSVPVIIARTDHIIVKEGSSALINCSAYGFPDLEFKWYNSVGKLLKEMDDEKEKGGGKWQMLDGGLLNITKVSFSDRGKYTCVASNIYGTINNTVTLRVIFTSGDMGVYYMVVCLVAFTIVMILNITRLCMMSSHLKKTEKAINEFFRTEGAEKLQKAFEIAKRIPIITSAKTLELAKVTQFKTMEFARYIEELARSVPLPPLIMNCRTIMEEIMEVVGLEEQGQNFVRHTPEGQEAPDRDEVYTIPNSLKRSESPTADSDASSLHEQPQQIAIKVSVHPQSKRDHVDDQEGGHFEVKDEEETEPSEEHSPETAEPSTDITTTELTSEETSPVEAPERGLPPAHLETTEPAVTCDRNTCIIYESHV.

Positions 1-28 are cleaved as a signal peptide; that stretch reads MGLQKSHLTVCLPPSVPFLILVSTLATA. The Extracellular portion of the chain corresponds to 29 to 148; it reads KSVTNSTLNG…TLRVIFTSGD (120 aa). 5 N-linked (GlcNAc...) asparagine glycosylation sites follow: Asn-33, Asn-37, Asn-67, Asn-111, and Asn-135. Residues 47-141 enclose the Ig-like C2-type domain; the sequence is PVIIARTDHI…GTINNTVTLR (95 aa). A disulfide bridge connects residues Cys-68 and Cys-125. Residues 149 to 169 traverse the membrane as a helical segment; it reads MGVYYMVVCLVAFTIVMILNI. The Cytoplasmic segment spans residues 170–409; that stretch reads TRLCMMSSHL…NTCIIYESHV (240 aa). Tyr-287 is subject to Phosphotyrosine. Residues Ser-298, Ser-303, Ser-306, and Ser-307 each carry the phosphoserine modification. The interval 319–395 is disordered; sequence VSVHPQSKRD…AHLETTEPAV (77 aa). Basic and acidic residues predominate over residues 325–340; it reads SKRDHVDDQEGGHFEV. The span at 356-373 shows a compositional bias: low complexity; the sequence is TAEPSTDITTTELTSEET.

The protein localises to the cell membrane. It localises to the nucleus. Its subcellular location is the cytoplasm. Functionally, may participate in the nuclear signaling of EGFR and MAPK1/ERK2. The sequence is that of Microfibrillar-associated protein 3-like (Mfap3l) from Mus musculus (Mouse).